The chain runs to 1066 residues: Isoleucine--tRNA ligase (1066 aa).

The 'HIGH' region signature appears at 49–59; it reads PYVSGAIHLGT. A 'KMSKS' region motif is present at residues 625-629; it reads KMSKS. K628 contacts ATP.

Belongs to the class-I aminoacyl-tRNA synthetase family. IleS type 2 subfamily. In terms of assembly, monomer. It depends on Zn(2+) as a cofactor.

It localises to the cytoplasm. The catalysed reaction is tRNA(Ile) + L-isoleucine + ATP = L-isoleucyl-tRNA(Ile) + AMP + diphosphate. Catalyzes the attachment of isoleucine to tRNA(Ile). As IleRS can inadvertently accommodate and process structurally similar amino acids such as valine, to avoid such errors it has two additional distinct tRNA(Ile)-dependent editing activities. One activity is designated as 'pretransfer' editing and involves the hydrolysis of activated Val-AMP. The other activity is designated 'posttransfer' editing and involves deacylation of mischarged Val-tRNA(Ile). In Pyrococcus horikoshii (strain ATCC 700860 / DSM 12428 / JCM 9974 / NBRC 100139 / OT-3), this protein is Isoleucine--tRNA ligase.